Reading from the N-terminus, the 324-residue chain is Ig gamma-1 chain C region secreted form (324 aa).

The CH1 stretch occupies residues 1 to 97 (AKTTPPSVYP…ASSTKVDKKI (97 aa)). An intrachain disulfide couples Cys-27 to Cys-82. Residues 98–110 (VPRDCGCKPCICT) are hinge. The segment at 111-217 (VPEVSSVFIF…PIEKTISKTK (107 aa)) is CH2. 2 disulfides stabilise this stretch: Cys-138-Cys-198 and Cys-244-Cys-302. An N-linked (GlcNAc...) asparagine glycan is attached at Asn-174. Positions 218 to 324 (GRPKAPQVYT…EKSLSHSPGK (107 aa)) are CH3.

It localises to the secreted. The sequence is that of Ig gamma-1 chain C region secreted form (Ighg1) from Mus musculus (Mouse).